Consider the following 335-residue polypeptide: Acetyl-coenzyme A carboxylase carboxyl transferase subunit alpha (335 aa).

In terms of domain architecture, CoA carboxyltransferase C-terminal spans 48–308 (TLELKVDALR…KEILIEELKA (261 aa)).

This sequence belongs to the AccA family. Acetyl-CoA carboxylase is a heterohexamer composed of biotin carboxyl carrier protein (AccB), biotin carboxylase (AccC) and two subunits each of ACCase subunit alpha (AccA) and ACCase subunit beta (AccD).

It localises to the cytoplasm. The enzyme catalyses N(6)-carboxybiotinyl-L-lysyl-[protein] + acetyl-CoA = N(6)-biotinyl-L-lysyl-[protein] + malonyl-CoA. It functions in the pathway lipid metabolism; malonyl-CoA biosynthesis; malonyl-CoA from acetyl-CoA: step 1/1. Functionally, component of the acetyl coenzyme A carboxylase (ACC) complex. First, biotin carboxylase catalyzes the carboxylation of biotin on its carrier protein (BCCP) and then the CO(2) group is transferred by the carboxyltransferase to acetyl-CoA to form malonyl-CoA. The protein is Acetyl-coenzyme A carboxylase carboxyl transferase subunit alpha of Pelodictyon phaeoclathratiforme (strain DSM 5477 / BU-1).